We begin with the raw amino-acid sequence, 35 residues long: Potassium channel toxin (35 aa).

3 disulfide bridges follow: Cys-6-Cys-25, Cys-11-Cys-30, and Cys-15-Cys-32.

It belongs to the short scorpion toxin superfamily. Potassium channel inhibitor family. Alpha-KTx 21 subfamily. As to expression, expressed by the venom gland.

It is found in the secreted. Its function is as follows. Toxin that blocks voltage-gated potassium channels (Kv). This is Potassium channel toxin from Tityus metuendus (Scorpion).